A 338-amino-acid chain; its full sequence is MAEISILGAGGLTGKELLLLFSRQKEHEVVHITSDKLAGKTISEVFPEVSFPKNLVFKKHEDIVPLKSLVVLAVPNEVSVESAPKFLDAGHKVIDLSGVYRLHNQEILEKYYKLKHTRFNYINRAVFGIPEIFRDQLKNADFVSNPGCFSTSVILPIFLLGQLRKNLRPRIIVDSKSGVSGAGGRTEDSGYSYTSVYENFRAYKILSHQHEPEIREYVYSKSGLSDPEVIFTPHLLPVYRGILSTIVLEFDSEPEQDLISILENSSLNEPFIRILKTPEEIELKKVQHTNFLDISLRKRGNTLVVVSALDNLVKGAAGQALQNINLMTGAKETLGLLP.

Residue Cys-148 is part of the active site.

It belongs to the NAGSA dehydrogenase family. Type 1 subfamily.

Its subcellular location is the cytoplasm. It carries out the reaction N-acetyl-L-glutamate 5-semialdehyde + phosphate + NADP(+) = N-acetyl-L-glutamyl 5-phosphate + NADPH + H(+). Its pathway is amino-acid biosynthesis; L-arginine biosynthesis; N(2)-acetyl-L-ornithine from L-glutamate: step 3/4. In terms of biological role, catalyzes the NADPH-dependent reduction of N-acetyl-5-glutamyl phosphate to yield N-acetyl-L-glutamate 5-semialdehyde. In Leptospira interrogans serogroup Icterohaemorrhagiae serovar copenhageni (strain Fiocruz L1-130), this protein is N-acetyl-gamma-glutamyl-phosphate reductase.